Here is a 160-residue protein sequence, read N- to C-terminus: CXXC motif containing zinc binding protein (160 aa).

4 residues coordinate Zn(2+): cysteine 33, cysteine 36, cysteine 67, and cysteine 70. Position 75 is a phosphoserine (serine 75).

The protein belongs to the UPF0587 family. Monomer.

This is CXXC motif containing zinc binding protein (CZIB) from Bos taurus (Bovine).